We begin with the raw amino-acid sequence, 199 residues long: Holliday junction branch migration complex subunit RuvA (199 aa).

The segment at 1–64 is domain I; that stretch reads MIAKLTGRLD…EDFLRLLGFA (64 aa). Residues 65–143 form a domain II region; it reads RAEERDWFRL…ALGGISGSGP (79 aa). The interval 144 to 146 is flexible linker; the sequence is ALS. The segment at 147–199 is domain III; the sequence is AAAGPVGDAIAALTGLGFKPGEASAAVAAANEELGADASLDALVRVALKKAAK.

Belongs to the RuvA family. In terms of assembly, homotetramer. Forms an RuvA(8)-RuvB(12)-Holliday junction (HJ) complex. HJ DNA is sandwiched between 2 RuvA tetramers; dsDNA enters through RuvA and exits via RuvB. An RuvB hexamer assembles on each DNA strand where it exits the tetramer. Each RuvB hexamer is contacted by two RuvA subunits (via domain III) on 2 adjacent RuvB subunits; this complex drives branch migration. In the full resolvosome a probable DNA-RuvA(4)-RuvB(12)-RuvC(2) complex forms which resolves the HJ.

Its subcellular location is the cytoplasm. Its function is as follows. The RuvA-RuvB-RuvC complex processes Holliday junction (HJ) DNA during genetic recombination and DNA repair, while the RuvA-RuvB complex plays an important role in the rescue of blocked DNA replication forks via replication fork reversal (RFR). RuvA specifically binds to HJ cruciform DNA, conferring on it an open structure. The RuvB hexamer acts as an ATP-dependent pump, pulling dsDNA into and through the RuvAB complex. HJ branch migration allows RuvC to scan DNA until it finds its consensus sequence, where it cleaves and resolves the cruciform DNA. The protein is Holliday junction branch migration complex subunit RuvA of Sphingopyxis alaskensis (strain DSM 13593 / LMG 18877 / RB2256) (Sphingomonas alaskensis).